Here is a 398-residue protein sequence, read N- to C-terminus: S-adenosylmethionine synthase (398 aa).

Residue 136 to 141 (GTGSSD) coordinates ATP.

This sequence belongs to the AdoMet synthase 2 family. The cofactor is Mg(2+).

It catalyses the reaction L-methionine + ATP + H2O = S-adenosyl-L-methionine + phosphate + diphosphate. It functions in the pathway amino-acid biosynthesis; S-adenosyl-L-methionine biosynthesis; S-adenosyl-L-methionine from L-methionine: step 1/1. In terms of biological role, catalyzes the formation of S-adenosylmethionine from methionine and ATP. The sequence is that of S-adenosylmethionine synthase from Methanosarcina barkeri (strain Fusaro / DSM 804).